We begin with the raw amino-acid sequence, 238 residues long: tRNA (guanine-N(7)-)-methyltransferase (238 aa).

Glu-68, Glu-93, Asp-120, and Asp-143 together coordinate S-adenosyl-L-methionine. The active site involves Asp-143. Residues Lys-147, Asp-179, and 216–219 (TKFE) each bind substrate.

Belongs to the class I-like SAM-binding methyltransferase superfamily. TrmB family. As to quaternary structure, monomer.

The catalysed reaction is guanosine(46) in tRNA + S-adenosyl-L-methionine = N(7)-methylguanosine(46) in tRNA + S-adenosyl-L-homocysteine. The protein operates within tRNA modification; N(7)-methylguanine-tRNA biosynthesis. Its function is as follows. Catalyzes the formation of N(7)-methylguanine at position 46 (m7G46) in tRNA. This Edwardsiella ictaluri (strain 93-146) protein is tRNA (guanine-N(7)-)-methyltransferase.